The sequence spans 349 residues: Acyl-CoA:acyl-CoA alkyltransferase (349 aa).

Glu97 serves as the catalytic Proton acceptor. Cys123 (acyl-thioester intermediate) is an active-site residue.

Belongs to the thiolase-like superfamily. OleA family.

The catalysed reaction is a 1,2-saturated acyl-CoA + an acyl-CoA + H2O = an (R)-2-alkyl-3-oxoalkanoate + 2 CoA + H(+). Functionally, involved in olefin biosynthesis. Catalyzes a non-decarboxylative head-to-head Claisen condensation of two acyl-CoA molecules, generating an (R)-2-alkyl-3-oxoalkanoate. The S.oneidensis oleABCD genes produce 3,6,9,12,15,19,22,25,28-hentriacontanonaene, which may aid the cells in adapting to a sudden drop in temperature. The polypeptide is Acyl-CoA:acyl-CoA alkyltransferase (Shewanella oneidensis (strain ATCC 700550 / JCM 31522 / CIP 106686 / LMG 19005 / NCIMB 14063 / MR-1)).